We begin with the raw amino-acid sequence, 68 residues long: Large ribosomal subunit protein bL31 (68 aa).

Positions 17, 19, 37, and 40 each coordinate Zn(2+).

This sequence belongs to the bacterial ribosomal protein bL31 family. Type A subfamily. As to quaternary structure, part of the 50S ribosomal subunit. Requires Zn(2+) as cofactor.

Functionally, binds the 23S rRNA. This Dehalococcoides mccartyi (strain ATCC BAA-2266 / KCTC 15142 / 195) (Dehalococcoides ethenogenes (strain 195)) protein is Large ribosomal subunit protein bL31.